The sequence spans 810 residues: Type I restriction enzyme EcoAI endonuclease subunit (810 aa).

The region spanning 183–343 is the Helicase ATP-binding domain; sequence EAVSNGQNRV…TDYFGDPVYV (161 aa). 197 to 203 serves as a coordination point for ATP; the sequence is ATGTGKT. Residues 412 to 575 enclose the Helicase C-terminal domain; that stretch reads TITDYLKRTN…DIADPESDFE (164 aa). A compositionally biased stretch (acidic residues) spans 578–588; that stretch reads LEEISEHDEEQ. Residues 578 to 608 form a disordered region; the sequence is LEEISEHDEEQVTGVDEPPAPPYQVTDTDDV.

It belongs to the HsdR family. The type I restriction/modification system is composed of three polypeptides R, M and S. The restriction enzyme has stoichiometry R(2)M(2)S(1) while the methyltransferase is M(2)S(1).

The enzyme catalyses Endonucleolytic cleavage of DNA to give random double-stranded fragments with terminal 5'-phosphates, ATP is simultaneously hydrolyzed.. In terms of biological role, the subtype B restriction (R) subunit of a type I restriction enzyme that recognizes 5'-GAGN(7)GTCA-3' and cleaves a random distance away. Subunit R is required for both nuclease and ATPase activities, but not for modification. After locating a non-methylated recognition site, the enzyme complex serves as a molecular motor that translocates DNA in an ATP-dependent manner until a collision occurs that triggers cleavage. This chain is Type I restriction enzyme EcoAI endonuclease subunit, found in Escherichia coli.